Reading from the N-terminus, the 330-residue chain is MDPTTPAWGTESTTMNGNDQALPLLCGKETLILVLLILFIALVGLVGNAFVLWLLGFRMRRNAFSVYVLSLAGADFLFLCFPMINCLEYLINFFHSISINFPSFFTTVMTCAYLAGLSMLSAISTERCLSVLWPIWYRCRRPRHLSAVLCVLLWALSLLLSILEGKFCGLLFSDGDSGWCQTFDFITAAWLMFLFVVLCGSSLALLVRILCGSQGLPLTRLYLTILLTVLIFLLCGLPFGIQWFLILWIWKNSDVLFCHIHPVSVVLSSFNSSANPIIYFFVGSFRKQWRLRQPVLKLALQRALQDTAEVDHSEGCFSQGTLEMSGSSLV.

Topologically, residues 1-33 are extracellular; it reads MDPTTPAWGTESTTMNGNDQALPLLCGKETLIL. Residues 34–54 form a helical membrane-spanning segment; sequence VLLILFIALVGLVGNAFVLWL. At 55 to 63 the chain is on the cytoplasmic side; the sequence is LGFRMRRNA. Residues 64–84 form a helical membrane-spanning segment; the sequence is FSVYVLSLAGADFLFLCFPMI. The Extracellular portion of the chain corresponds to 85–96; it reads NCLEYLINFFHS. Residues 97-117 traverse the membrane as a helical segment; that stretch reads ISINFPSFFTTVMTCAYLAGL. Residues 118–144 are Cytoplasmic-facing; that stretch reads SMLSAISTERCLSVLWPIWYRCRRPRH. Residues 145–165 traverse the membrane as a helical segment; it reads LSAVLCVLLWALSLLLSILEG. The Extracellular portion of the chain corresponds to 166 to 184; sequence KFCGLLFSDGDSGWCQTFD. Residues 185 to 205 traverse the membrane as a helical segment; that stretch reads FITAAWLMFLFVVLCGSSLAL. Residues 206–228 are Cytoplasmic-facing; it reads LVRILCGSQGLPLTRLYLTILLT. Residues 229 to 249 traverse the membrane as a helical segment; that stretch reads VLIFLLCGLPFGIQWFLILWI. The Extracellular segment spans residues 250 to 264; that stretch reads WKNSDVLFCHIHPVS. A helical transmembrane segment spans residues 265–285; that stretch reads VVLSSFNSSANPIIYFFVGSF. At 286 to 330 the chain is on the cytoplasmic side; the sequence is RKQWRLRQPVLKLALQRALQDTAEVDHSEGCFSQGTLEMSGSSLV.

It belongs to the G-protein coupled receptor 1 family. Mas subfamily.

The protein localises to the cell membrane. In terms of biological role, mast cell-specific receptor for basic secretagogues, i.e. cationic amphiphilic drugs, as well as endo- or exogenous peptides, consisting of a basic head group and a hydrophobic core. Recognizes and binds small molecules containing a cyclized tetrahydroisoquinoline (THIQ), such as non-steroidal neuromuscular blocking drugs (NMBDs), including tubocurarine and atracurium. In response to these compounds, mediates pseudo-allergic reactions characterized by histamine release, inflammation and airway contraction. This is Mas-related G-protein coupled receptor member X2 (MRGPRX2) from Rhinopithecus bieti (Black snub-nosed monkey).